The primary structure comprises 403 residues: MRPNIVTEAGVQTRVGQWWNAIPFLTSSVVVVCGVIYLICLLTGYDTFYEVCFLPSAIISRFQVYRFYTAIIFHGSLLHVLFNMMALVPMGSELERIMGSVRLLYLTVLLATTNAVLHLLIASLAGYNPFYQYDHLMNECAIGFSGILFSMIVIETSLSGVTSRSVFGLFNVPAKLYPWILLIVFQLLMTNVSLLGHLCGILSGFSYSYGLFNFLMPGSSFFTTIESASWMSSFIRRPKFIMCTGGNPSSYIPTYSAQNTTSSGFSTGNAWRSLSSWLPQREASNQSSEDSRFPGRGRTLSTARDPTAPAGETDPNLHARLLEDSSSPDRLSDATVNTVADSRQAPIANAAVLPQSQGRVAASEEQIQKLVAMGFDRTQVEVALAAADDDLTVAVEILMSQQA.

Helical transmembrane passes span 22-42, 70-90, 103-123, 141-161, and 176-196; these read IPFL…ICLL, AIIF…LVPM, LLYL…LIAS, AIGF…LSGV, and LYPW…SLLG. The active-site Nucleophile is Ser-145. Catalysis depends on His-197, which acts as the Charge relay system. Residues 198-218 form a helical membrane-spanning segment; that stretch reads LCGILSGFSYSYGLFNFLMPG. Positions 282–316 are disordered; sequence EASNQSSEDSRFPGRGRTLSTARDPTAPAGETDPN. The UBA domain occupies 361–401; sequence AASEEQIQKLVAMGFDRTQVEVALAAADDDLTVAVEILMSQ.

Belongs to the peptidase S54 family.

Its subcellular location is the membrane. Functionally, probable rhomboid-type serine protease that catalyzes intramembrane proteolysis. May function in senescence. The chain is Rhomboid-like protein 15 from Arabidopsis thaliana (Mouse-ear cress).